The following is a 259-amino-acid chain: uncharacterized protein (259 aa).

Residues 51-173 (GKTHAKIVAN…IAVADGTDMT (123 aa)) enclose the HD domain.

This is an uncharacterized protein from Methanocaldococcus jannaschii (strain ATCC 43067 / DSM 2661 / JAL-1 / JCM 10045 / NBRC 100440) (Methanococcus jannaschii).